Reading from the N-terminus, the 329-residue chain is GDP-mannose transporter (329 aa).

At 1–13 the chain is on the cytoplasmic side; the sequence is MSELKVDTGRLSH. Residues 14-34 traverse the membrane as a helical segment; sequence IANSGPMSILAYCASSILMTV. At 35–44 the chain is on the lumenal side; the sequence is TNKCVVGSDK. A helical transmembrane segment spans residues 45-65; it reads FNMLFVMLFAQSLVCVTALVL. The Cytoplasmic portion of the chain corresponds to 66 to 79; it reads LKALGYVQYRPLNK. A helical membrane pass occupies residues 80-100; it reads VDVKNWLLISVLLVLMTYTSS. Residues 101-109 lie on the Lumenal side of the membrane; sequence RALKYLAVP. The helical transmembrane segment at 110-130 threads the bilayer; that stretch reads IYTIFKNLTIILIAYGEVLFF. Over 131-133 the chain is Cytoplasmic; the sequence is GGR. Residues 134 to 154 form a helical membrane-spanning segment; the sequence is VTAMELSSFLLIVLSSVVATL. At 155–174 the chain is on the lumenal side; it reads GDQQALAKKPLAAAVESILG. A helical transmembrane segment spans residues 175 to 195; that stretch reads LNVGYFWMFTNCICSALFVLI. Over 196–214 the chain is Cytoplasmic; sequence MRKRIALTKFKDFDTMFYN. A helical membrane pass occupies residues 215–235; sequence NILSLPLLMLASFMFEDWGAA. Residues 236-245 lie on the Lumenal side of the membrane; the sequence is NIARNLTKDY. The N-linked (GlcNAc...) asparagine glycan is linked to Asn240. Residues 246-266 traverse the membrane as a helical segment; that stretch reads IIIMIISGLASVGISYCSGWC. The Cytoplasmic segment spans residues 267 to 273; it reads VRVTSST. A helical transmembrane segment spans residues 274–294; sequence TYSMVGALNKLPIALSGLLFF. Topologically, residues 295-298 are lumenal; the sequence is DAPK. The helical transmembrane segment at 299–319 threads the bilayer; it reads NFLSIFSIFLGFLSGIVYAVA. The Cytoplasmic portion of the chain corresponds to 320–329; that stretch reads KQKKQSQPAN.

The protein belongs to the TPT transporter family. SLC35D subfamily. Homooligomer.

It localises to the golgi apparatus membrane. The protein resides in the cytoplasmic vesicle membrane. Its subcellular location is the endoplasmic reticulum membrane. Involved in the import of GDP-mannose from the cytoplasm into the Golgi lumen. The protein is GDP-mannose transporter (VRG4) of Eremothecium gossypii (strain ATCC 10895 / CBS 109.51 / FGSC 9923 / NRRL Y-1056) (Yeast).